The chain runs to 590 residues: 2-hydroxyacyl-CoA lyase (590 aa).

Residues Gly-43, Gln-128, Gln-255, 273-274, and Arg-362 contribute to the 2-hydroxyisobutanoyl-CoA site; that span reads RS. 410–412 lines the thiamine diphosphate pocket; sequence GDL. 2-hydroxyisobutanoyl-CoA is bound at residue Arg-417. Gly-433 provides a ligand contact to thiamine diphosphate. Asp-460 is a Mg(2+) binding site. Thiamine diphosphate-binding positions include 461-462 and 487-492; these read GA and NRAWNI. Mg(2+) is bound by residues Asn-487 and Ala-489. Residue Glu-493 is the Proton acceptor of the active site. Position 561-564 (561-564) interacts with 2-hydroxyisobutanoyl-CoA; it reads DSGK. A C-terminal lid region spans residues 566–590; it reads LGFVPDYQALTPWNDAEVARRQEGI.

Belongs to the TPP enzyme family. In terms of assembly, a homotetramer formed by a dimer of dimers; active sites are located in the dimer interface. Requires Mg(2+) as cofactor. The cofactor is thiamine diphosphate.

It carries out the reaction 2-hydroxyisobutanoyl-CoA = formyl-CoA + acetone. With respect to regulation, activity is stimulated by thiamine diphosphate. Functionally, a lyase that reversibly degrades 2-hydroxyisobutyryl-CoA (2-HIB-CoA) to acetone and formyl-CoA. Probably also cleaves 2-hydroxy-2-methylbutyryl-CoA to butanone and formyl-CoA. Does not act on 2-hydroxy-2-ethylbutyryl-CoA. A C-terminal lid closes the active site upon substrate binding, and with residues Leu-127 and Ile-492 restricts the size of the active site cavity so it can only use short-chain (C4 and C5) acyl substrates. Part of a pathway that allows cells to grow on 2-methylpropane-1,2-diol or 2-hydroxyisobutyric acid (2-HIBA) as a sole carbon source. In Actinomycetospora chiangmaiensis (strain DSM 45062 / JCM 15998 / CCTCC AA 205017 / NBRC 104400 / YIM 0006), this protein is 2-hydroxyacyl-CoA lyase.